The sequence spans 577 residues: Proton channel OTOP3 (577 aa).

The segment at 1–46 (MASQTSAPAEPAPMPSPEAKTTEGASSYDQADMETKHAGSPCPPKQ) is disordered. The Cytoplasmic segment spans residues 1–69 (MASQTSAPAE…RDRQAQKAGQ (69 aa)). The helical transmembrane segment at 70 to 90 (LFSGLLALNVVFLGGAFICSM) threads the bilayer. The Extracellular segment spans residues 91–100 (IFNKVSVTLG). A helical membrane pass occupies residues 101-124 (DVWILLAALKVLSLLWLLYYTVGT). Topologically, residues 125 to 140 (TRKPHAVLYRDPHAGP) are cytoplasmic. The chain crosses the membrane as a helical span at residues 141-162 (IWVRGSLVLFGSCTVCLNIFRM). Residues 163–174 (GYDVSHIHCKSE) lie on the Extracellular side of the membrane. A helical transmembrane segment spans residues 175–198 (VELIFPAIEIVFMIIQTWVLWRHC). The Cytoplasmic portion of the chain corresponds to 199–206 (KDCVQVQT). The helical transmembrane segment at 207-229 (NFTRCGLMLTLATNLLMWVLAVT) threads the bilayer. At 230 to 276 (NDSMHREIEAELDALMEKFSGNGTNTCMCLNTTVCEVFRKGYLMLYP) the chain is on the extracellular side. A helical membrane pass occupies residues 277–293 (FSTEYCLICCAVLFVMW). Topologically, residues 294–319 (KNVSRSLAAHTGAHPNRSPFRLHGTI) are cytoplasmic. A helical transmembrane segment spans residues 320–339 (FGPLLGLLALVAGVCVFVLF). The Extracellular portion of the chain corresponds to 340–353 (QIEASGPDIARQYF). A helical membrane pass occupies residues 354–376 (TLYYAFYVAVLPTMSLACLAGTA). Residues 377–394 (IHGLEERELDTLKNPTRS) lie on the Cytoplasmic side of the membrane. A helical transmembrane segment spans residues 395–416 (LDVVLLMGAALGQMGIAYFSIV). Topologically, residues 417-427 (AIVATQPHELL) are extracellular. A helical membrane pass occupies residues 428-450 (NQLILAYSLLLILQHITQNLFII). The Cytoplasmic segment spans residues 451–510 (EGLHRRPLWEPAVSGVMEKQDVELPRRGSLRELGQDLRRASRAYIHSFSHLNWKRRMLKE). Residues 511-528 (ISLFLILCNITLWMMPAF) traverse the membrane as a helical segment. Over 529-547 (GIHPEFENGLEKDFYGYRT) the chain is Extracellular. The chain crosses the membrane as a helical span at residues 548 to 570 (WFTIVNFGLPLGVFYRMHSVGGL). Residues 571–577 (VEVYLGA) lie on the Cytoplasmic side of the membrane.

Belongs to the otopetrin family. In terms of assembly, homodimer. Expressed in epidermis, small intestine, stomach and retina.

The protein localises to the cell membrane. The catalysed reaction is H(+)(in) = H(+)(out). Activated by extracellular acidification. Activated by Zn(2+) under non-acidic conditions. Proton-selective channel gated by extracellular protons. The sequence is that of Proton channel OTOP3 from Mus musculus (Mouse).